We begin with the raw amino-acid sequence, 300 residues long: Auxin-responsive protein IAA7 (300 aa).

Disordered stretches follow at residues 1–80 (MGEA…DGDK) and 92–125 (VSHS…LASN). Residues 43 to 47 (LSLGL) carry the EAR-like (transcriptional repression) motif. Residues 92-103 (VSHSQGKANKNK) are compositionally biased toward polar residues. A PB1 domain is found at 177–281 (APFIKINMDG…SVKRLRVLKT (105 aa)).

This sequence belongs to the Aux/IAA family. As to quaternary structure, homodimers and heterodimers. Expressed at low levels in roots and shoots.

The protein resides in the nucleus. Its function is as follows. Aux/IAA proteins are short-lived transcriptional factors that function as repressors of early auxin response genes at low auxin concentrations. The sequence is that of Auxin-responsive protein IAA7 (IAA7) from Oryza sativa subsp. japonica (Rice).